Reading from the N-terminus, the 106-residue chain is Nucleoid-associated protein XCV1128 (106 aa).

The tract at residues 81–106 is disordered; the sequence is IDAESKDRMGSATAGMQLPPGMKLPF.

This sequence belongs to the YbaB/EbfC family. Homodimer.

It is found in the cytoplasm. It localises to the nucleoid. Binds to DNA and alters its conformation. May be involved in regulation of gene expression, nucleoid organization and DNA protection. The protein is Nucleoid-associated protein XCV1128 of Xanthomonas euvesicatoria pv. vesicatoria (strain 85-10) (Xanthomonas campestris pv. vesicatoria).